The primary structure comprises 492 residues: Catalase (492 aa).

Active-site residues include histidine 65 and asparagine 138. Heme is bound at residue tyrosine 348.

Belongs to the catalase family. Homotetramer. Requires heme as cofactor.

It is found in the cytoplasm. Its subcellular location is the cytosol. The protein localises to the peroxisome matrix. It catalyses the reaction 2 H2O2 = O2 + 2 H2O. Functionally, catalyzes the degradation of hydrogen peroxide (H(2)O(2)) generated by peroxisomal oxidases to water and oxygen, thereby protecting cells from the toxic effects of hydrogen peroxide. The sequence is that of Catalase (CATA) from Triticum aestivum (Wheat).